Here is a 281-residue protein sequence, read N- to C-terminus: RNA polymerase sigma factor RpoH (281 aa).

Residues 52 to 121 (LILSHLRFVI…IHEYVLRNWR (70 aa)) are sigma-70 factor domain-2. The Interaction with polymerase core subunit RpoC signature appears at 76–79 (DLIQ). The tract at residues 226-277 (ALQSLDARSQDIIKARWLDDNKATLHDLAAKYNVSAERIRQLETNALKKLKS) is sigma-70 factor domain-4. Residues 250-269 (LHDLAAKYNVSAERIRQLET) constitute a DNA-binding region (H-T-H motif).

This sequence belongs to the sigma-70 factor family. RpoH subfamily. Interacts with the RNA polymerase core enzyme.

It is found in the cytoplasm. Functionally, sigma factors are initiation factors that promote the attachment of RNA polymerase to specific initiation sites and are then released. This sigma factor is involved in regulation of expression of heat shock genes. This Haemophilus influenzae (strain ATCC 51907 / DSM 11121 / KW20 / Rd) protein is RNA polymerase sigma factor RpoH.